The primary structure comprises 152 residues: Flagellar assembly factor FliW (152 aa).

Belongs to the FliW family. In terms of assembly, interacts with translational regulator CsrA and flagellin(s).

It localises to the cytoplasm. Its function is as follows. Acts as an anti-CsrA protein, binds CsrA and prevents it from repressing translation of its target genes, one of which is flagellin. Binds to flagellin and participates in the assembly of the flagellum. The sequence is that of Flagellar assembly factor FliW from Desulfitobacterium hafniense (strain Y51).